A 328-amino-acid chain; its full sequence is Flotillin-like protein FloA (328 aa).

2 helical membrane passes run 9–29 and 30–50; these read LLIT…VPVG and LWIS…IGMR.

This sequence belongs to the flotillin-like FloA family. In terms of assembly, homooligomerizes.

It is found in the cell membrane. The protein resides in the membrane raft. Its function is as follows. Found in functional membrane microdomains (FMM) that may be equivalent to eukaryotic membrane rafts. FMMs are highly dynamic and increase in number as cells age. Flotillins are thought to be important factors in membrane fluidity. The chain is Flotillin-like protein FloA from Exiguobacterium sp. (strain ATCC BAA-1283 / AT1b).